Reading from the N-terminus, the 251-residue chain is 1-(5-phosphoribosyl)-5-[(5-phosphoribosylamino)methylideneamino] imidazole-4-carboxamide isomerase (251 aa).

The active-site Proton acceptor is the aspartate 8. Aspartate 131 serves as the catalytic Proton donor.

This sequence belongs to the HisA/HisF family.

It localises to the cytoplasm. It carries out the reaction 1-(5-phospho-beta-D-ribosyl)-5-[(5-phospho-beta-D-ribosylamino)methylideneamino]imidazole-4-carboxamide = 5-[(5-phospho-1-deoxy-D-ribulos-1-ylimino)methylamino]-1-(5-phospho-beta-D-ribosyl)imidazole-4-carboxamide. It functions in the pathway amino-acid biosynthesis; L-histidine biosynthesis; L-histidine from 5-phospho-alpha-D-ribose 1-diphosphate: step 4/9. The sequence is that of 1-(5-phosphoribosyl)-5-[(5-phosphoribosylamino)methylideneamino] imidazole-4-carboxamide isomerase from Burkholderia cenocepacia (strain HI2424).